Here is a 259-residue protein sequence, read N- to C-terminus: Histidinol-phosphatase (259 aa).

Residues glutamate 66, aspartate 82, isoleucine 84, aspartate 85, and aspartate 207 each coordinate Mg(2+). Glutamate 66 is a substrate binding site. Substrate contacts are provided by residues 84 to 87 (IDGT) and aspartate 207.

The protein belongs to the inositol monophosphatase superfamily. The cofactor is Mg(2+).

It carries out the reaction L-histidinol phosphate + H2O = L-histidinol + phosphate. It participates in amino-acid biosynthesis; L-histidine biosynthesis; L-histidine from 5-phospho-alpha-D-ribose 1-diphosphate: step 8/9. Catalyzes the dephosphorylation of histidinol-phosphate to histidinol, the direct precursor of histidine. The polypeptide is Histidinol-phosphatase (hisN) (Chlorobaculum parvum (strain DSM 263 / NCIMB 8327) (Chlorobium vibrioforme subsp. thiosulfatophilum)).